Here is a 152-residue protein sequence, read N- to C-terminus: Ribosome maturation factor RimP (152 aa).

This sequence belongs to the RimP family.

The protein localises to the cytoplasm. Its function is as follows. Required for maturation of 30S ribosomal subunits. The sequence is that of Ribosome maturation factor RimP from Desulfitobacterium hafniense (strain DSM 10664 / DCB-2).